The following is a 371-amino-acid chain: Lysine racemase (371 aa).

Lys39 (proton acceptor) is an active-site residue. Position 39 is an N6-(pyridoxal phosphate)lysine (Lys39). Substrate is bound at residue Arg135. Catalysis depends on Tyr266, which acts as the Proton acceptor. Met313 provides a ligand contact to substrate.

The protein belongs to the alanine racemase family. In terms of assembly, homodimer. Pyridoxal 5'-phosphate serves as cofactor.

The enzyme catalyses L-lysine = D-lysine. Its function is as follows. Catalyzes the interconversion of D-lysine and L-lysine. Can also use arginine and ornithine, but not alanine. The polypeptide is Lysine racemase (Oenococcus oeni (strain ATCC BAA-331 / PSU-1)).